Consider the following 185-residue polypeptide: uncharacterized protein (185 aa).

Residues 1–56 (MSSFTIPSPSSFSLSNSYNQTSPHSFTLRNSRSNFEFHRLRLDVESRRRSTSLRSN) constitute a chloroplast transit peptide. Residues 48-67 (RRSTSLRSNCSTKGTDSGEN) are disordered. Polar residues predominate over residues 52–64 (SLRSNCSTKGTDS). A coiled-coil region spans residues 105 to 138 (QAEQQKQVQEIQEEVLERAKKAKERAARETMEEQ).

The protein localises to the plastid. Its subcellular location is the chloroplast. The protein resides in the plastoglobule. This is an uncharacterized protein from Arabidopsis thaliana (Mouse-ear cress).